The chain runs to 480 residues: Caspase-8 (480 aa).

Positions 1-218 (MDFQSCLYAI…ELCDSPREQD (218 aa)) are excised as a propeptide. DED domains are found at residues 3 to 80 (FQSC…NFLD) and 101 to 177 (YRVM…KIED). Phosphoserine is present on residues S188 and S213. An N6-acetyllysine modification is found at K226. Residue H319 is part of the active site. Y336 carries the post-translational modification Phosphotyrosine. C362 is a catalytic residue. Positions 377–387 (FEQQNHTLEVD) are excised as a propeptide. The residue at position 389 (S389) is a Phosphoserine; by CDK1.

The protein belongs to the peptidase C14A family. In terms of assembly, heterotetramer that consists of two anti-parallel arranged heterodimers, each one formed by a 18 kDa (p18) and a 10 kDa (p10) subunit. Component of the death-induced signaling complex (DISC) composed of cell surface receptor FAS/CD95 or TNFRSF1A, adapter protein FADD and the CASP8 protease; recruitment of CASP8 to the complex is required for processing of CASP8 into the p18 and p10 subunits. Component of the AIM2 PANoptosome complex, a multiprotein complex that drives inflammatory cell death (PANoptosis). Interacts with CFLAR and PEA15. Interacts with RFFL and RNF34; negatively regulate CASP8 through proteasomal degradation. Interacts with TNFAIP8L2. Interacts with CASP8AP2. Interacts with NOL3; decreases CASP8 activity in a mitochondria localization- and phosphorylation-dependent manner and this interaction is dissociated by calcium. Interacts with UBR2. Interacts with RIPK1. Interacts with stimulated TNFRSF10B; this interaction is followed by CASP8 proteolytic cleavage and activation. Post-translationally, generation of the subunits requires association with the death-inducing signaling complex (DISC), whereas additional processing is likely due to the autocatalytic activity of the activated protease. GZMB and CASP10 can be involved in these processing events. (Microbial infection) Proteolytically cleaved by the cowpox virus CRMA death inhibitory protein. In terms of processing, phosphorylation on Ser-389 during mitosis by CDK1 inhibits activation by proteolysis and prevents apoptosis. This phosphorylation occurs in cancer cell lines, as well as in primary breast tissues and lymphocytes. In terms of tissue distribution, expressed in a wide variety of tissues. Highest expression in spleen, thymus, lung, liver and kidney. Lower expression in heart, brain, testis and skeletal muscle.

It is found in the cytoplasm. It localises to the nucleus. The enzyme catalyses Strict requirement for Asp at position P1 and has a preferred cleavage sequence of (Leu/Asp/Val)-Glu-Thr-Asp-|-(Gly/Ser/Ala).. Its activity is regulated as follows. CASP8 activity is restricted by RIPK1. With respect to regulation, (Microbial infection) Inhibited by baculovirus p35 protein P35. Thiol protease that plays a key role in programmed cell death by acting as a molecular switch for apoptosis, necroptosis and pyroptosis, and is required to prevent tissue damage during embryonic development and adulthood. Initiator protease that induces extrinsic apoptosis by mediating cleavage and activation of effector caspases responsible for FAS/CD95-mediated and TNFRSF1A-induced cell death. Cleaves and activates effector caspases CASP3, CASP4, CASP6, CASP7, CASP9 and CASP10. Binding to the adapter molecule FADD recruits it to either receptor FAS/CD95 or TNFRSF1A. The resulting aggregate called the death-inducing signaling complex (DISC) performs CASP8 proteolytic activation. The active dimeric enzyme is then liberated from the DISC and free to activate downstream apoptotic proteases. Proteolytic fragments of the N-terminal propeptide (termed CAP3, CAP5 and CAP6) are likely retained in the DISC. In addition to extrinsic apoptosis, also acts as a negative regulator of necroptosis: acts by cleaving RIPK1 at 'Asp-325', which is crucial to inhibit RIPK1 kinase activity, limiting TNF-induced apoptosis, necroptosis and inflammatory response. Also able to initiate pyroptosis by mediating cleavage and activation of gasdermin-C and -D (GSDMC and GSDMD, respectively): gasdermin cleavage promotes release of the N-terminal moiety that binds to membranes and forms pores, triggering pyroptosis. Initiates pyroptosis following inactivation of MAP3K7/TAK1. Also acts as a regulator of innate immunity by mediating cleavage and inactivation of N4BP1 downstream of TLR3 or TLR4, thereby promoting cytokine production. May participate in the Granzyme B (GZMB) cell death pathways. Cleaves PARP1 and PARP2. This Mus musculus (Mouse) protein is Caspase-8.